The primary structure comprises 63 residues: Alpha-conotoxin-like PuSG1.1 (63 aa).

The first 21 residues, 1-21 (MRCLAFLVVTLLLFTATATTG), serve as a signal peptide directing secretion. The propeptide occupies 22–43 (ASNGMNAAASGEAPDSISLAVR). Disulfide bonds link Cys-46-Cys-52 and Cys-47-Cys-60. A lacks the Ser-Xaa-Pro motif that is crucial for potent interaction with nAChR region spans residues 48-50 (PDP).

This sequence belongs to the conotoxin A superfamily. In terms of tissue distribution, expressed by the salivary gland.

It localises to the secreted. In terms of biological role, alpha-conopeptides-like may act on postsynaptic membranes, they bind to the nicotinic acetylcholine receptors (nAChR) and thus inhibit them. Has possibly a distinct nAChR binding mode from other alpha-conotoxins, due to a different three residue motif (lacks the Ser-Xaa-Pro motif). The chain is Alpha-conotoxin-like PuSG1.1 from Conus pulicarius (Flea-bitten cone).